A 699-amino-acid chain; its full sequence is Elongation factor G (699 aa).

Positions 8-288 constitute a tr-type G domain; it reads EDYRNFGIMA…AVVDYLPSPL (281 aa). Residues 17 to 24, 86 to 90, and 140 to 143 each bind GTP; these read AHIDAGKT, DTPGH, and NKMD.

Belongs to the TRAFAC class translation factor GTPase superfamily. Classic translation factor GTPase family. EF-G/EF-2 subfamily.

It is found in the cytoplasm. Its function is as follows. Catalyzes the GTP-dependent ribosomal translocation step during translation elongation. During this step, the ribosome changes from the pre-translocational (PRE) to the post-translocational (POST) state as the newly formed A-site-bound peptidyl-tRNA and P-site-bound deacylated tRNA move to the P and E sites, respectively. Catalyzes the coordinated movement of the two tRNA molecules, the mRNA and conformational changes in the ribosome. This Rhizobium etli (strain CIAT 652) protein is Elongation factor G.